The primary structure comprises 234 residues: BTB/POZ domain-containing protein KCTD5 (234 aa).

Alanine 2 bears the N-acetylalanine mark. Residues 44–146 (KWVRLNVGGT…LVKDKIRERD (103 aa)) form the BTB domain. The segment at 211–234 (NSPHGPASEPSEKAKILQERGSRM) is disordered. Over residues 220–234 (PSEKAKILQERGSRM) the composition is skewed to basic and acidic residues.

As to quaternary structure, homopentamer. Interacts (via C-terminus) with GRASP55/GORASP2. Interacts with CUL3 and with ubiquitinated proteins. Interacts with CRY1.

Its subcellular location is the cytoplasm. It is found in the cytosol. The protein localises to the nucleus. In terms of biological role, its interaction with CUL3 suggests that it may act as a substrate adapter in some E3 ligase complex. Does not affect the function of Kv channel Kv2.1/KCNB1, Kv1.2/KCNA2, Kv4.2/KCND2 and Kv3.4/KCNC4. The protein is BTB/POZ domain-containing protein KCTD5 (KCTD5) of Bos taurus (Bovine).